Reading from the N-terminus, the 312-residue chain is Acetyl-coenzyme A carboxylase carboxyl transferase subunit beta (312 aa).

Positions 1-52 (MEMDTAVENPAVEKNGQPTPSSTSTATDAAPTPNAPNRPAPNTAGNRKRGVP) are disordered. The segment covering 18–32 (PTPSSTSTATDAAPT) has biased composition (low complexity). In terms of domain architecture, CoA carboxyltransferase N-terminal spans 55–312 (VWRKCDSCGA…IATAIDYCGK (258 aa)). Residues C59, C62, C78, and C81 each coordinate Zn(2+). Residues 59–81 (CDSCGASLFYKEVQQRLNVCPQC) form a C4-type zinc finger.

The protein belongs to the AccD/PCCB family. In terms of assembly, acetyl-CoA carboxylase is a heterohexamer composed of biotin carboxyl carrier protein (AccB), biotin carboxylase (AccC) and two subunits each of ACCase subunit alpha (AccA) and ACCase subunit beta (AccD). Requires Zn(2+) as cofactor.

The protein resides in the cytoplasm. It carries out the reaction N(6)-carboxybiotinyl-L-lysyl-[protein] + acetyl-CoA = N(6)-biotinyl-L-lysyl-[protein] + malonyl-CoA. It participates in lipid metabolism; malonyl-CoA biosynthesis; malonyl-CoA from acetyl-CoA: step 1/1. In terms of biological role, component of the acetyl coenzyme A carboxylase (ACC) complex. Biotin carboxylase (BC) catalyzes the carboxylation of biotin on its carrier protein (BCCP) and then the CO(2) group is transferred by the transcarboxylase to acetyl-CoA to form malonyl-CoA. The chain is Acetyl-coenzyme A carboxylase carboxyl transferase subunit beta from Rhodopirellula baltica (strain DSM 10527 / NCIMB 13988 / SH1).